We begin with the raw amino-acid sequence, 426 residues long: 4-aminobutyrate aminotransferase GabT (426 aa).

Pyridoxal 5'-phosphate is bound by residues 111-112 (GS) and glutamine 242. The residue at position 268 (lysine 268) is an N6-(pyridoxal phosphate)lysine. Threonine 297 provides a ligand contact to pyridoxal 5'-phosphate.

It belongs to the class-III pyridoxal-phosphate-dependent aminotransferase family. In terms of assembly, homotetramer. The cofactor is pyridoxal 5'-phosphate.

It catalyses the reaction 4-aminobutanoate + 2-oxoglutarate = succinate semialdehyde + L-glutamate. The catalysed reaction is 5-aminopentanoate + 2-oxoglutarate = 5-oxopentanoate + L-glutamate. It functions in the pathway amino-acid degradation; 4-aminobutanoate degradation. Its pathway is amino-acid degradation. Functionally, pyridoxal phosphate-dependent enzyme that catalyzes transamination between primary amines and alpha-keto acids. Catalyzes the transfer of the amino group from gamma-aminobutyrate (GABA) to alpha-ketoglutarate (KG) to yield succinic semialdehyde (SSA) and glutamate. Thereby functions in a GABA degradation pathway that allows some E.coli strains to utilize GABA as a nitrogen source for growth. Also catalyzes the conversion of 5-aminovalerate to glutarate semialdehyde, as part of a L-lysine degradation pathway that proceeds via cadaverine, glutarate and L-2-hydroxyglutarate. The chain is 4-aminobutyrate aminotransferase GabT (gabT) from Escherichia coli (strain K12).